The sequence spans 82 residues: Toxin NaTx-13 (82 aa).

Positions 6–70 (PGGYPVNQFK…KNSIEVFSCG (65 aa)) constitute an LCN-type CS-alpha/beta domain. 4 disulfides stabilise this stretch: C16–C69, C20–C44, C30–C49, and C34–C51.

This sequence belongs to the long (4 C-C) scorpion toxin superfamily. Sodium channel inhibitor family. In terms of tissue distribution, expressed by the venom gland.

Its subcellular location is the secreted. In terms of biological role, probable sodium channel inhibitor. The sequence is that of Toxin NaTx-13 from Centruroides sculpturatus (Arizona bark scorpion).